The chain runs to 239 residues: Phosducin-like protein 2 (239 aa).

Positions 26–87 (TEDELFDLIK…IQQMKVEAEL (62 aa)) form a coiled coil. Residues 36–196 (EAAEMATEAE…TTVNDIEWQL (161 aa)) form the Phosducin domain. Positions 42–59 (TEAEKNEKLENASLKDLK) are enriched in basic and acidic residues. Disordered regions lie at residues 42–64 (TEAE…MEDD) and 212–239 (ITLA…DSDD). The tract at residues 90 to 239 (FGELKEISEP…DESDNSDSDD (150 aa)) is thioredoxin fold. Over residues 214 to 224 (LARKKSQKSRY) the composition is skewed to basic residues. Residues 230 to 239 (DESDNSDSDD) are compositionally biased toward acidic residues.

Belongs to the phosducin family.

The sequence is that of Phosducin-like protein 2 (phlp2) from Dictyostelium discoideum (Social amoeba).